A 351-amino-acid chain; its full sequence is UDP-3-O-acylglucosamine N-acyltransferase (351 aa).

Residue histidine 257 is the Proton acceptor of the active site.

The protein belongs to the transferase hexapeptide repeat family. LpxD subfamily. In terms of assembly, homotrimer.

The enzyme catalyses a UDP-3-O-[(3R)-3-hydroxyacyl]-alpha-D-glucosamine + a (3R)-hydroxyacyl-[ACP] = a UDP-2-N,3-O-bis[(3R)-3-hydroxyacyl]-alpha-D-glucosamine + holo-[ACP] + H(+). It participates in bacterial outer membrane biogenesis; LPS lipid A biosynthesis. Catalyzes the N-acylation of UDP-3-O-acylglucosamine using 3-hydroxyacyl-ACP as the acyl donor. Is involved in the biosynthesis of lipid A, a phosphorylated glycolipid that anchors the lipopolysaccharide to the outer membrane of the cell. The chain is UDP-3-O-acylglucosamine N-acyltransferase from Methylorubrum extorquens (strain CM4 / NCIMB 13688) (Methylobacterium extorquens).